Reading from the N-terminus, the 547-residue chain is ATP synthase subunit alpha (547 aa).

173–180 (GDRATGKT) serves as a coordination point for ATP. Residues 526–547 (PEAEALADEDVEQEQIVRQKRG) form a disordered region. Residues 528–538 (AEALADEDVEQ) are compositionally biased toward acidic residues.

The protein belongs to the ATPase alpha/beta chains family. In terms of assembly, F-type ATPases have 2 components, CF(1) - the catalytic core - and CF(0) - the membrane proton channel. CF(1) has five subunits: alpha(3), beta(3), gamma(1), delta(1), epsilon(1). CF(0) has three main subunits: a(1), b(2) and c(9-12). The alpha and beta chains form an alternating ring which encloses part of the gamma chain. CF(1) is attached to CF(0) by a central stalk formed by the gamma and epsilon chains, while a peripheral stalk is formed by the delta and b chains.

The protein resides in the cell membrane. The enzyme catalyses ATP + H2O + 4 H(+)(in) = ADP + phosphate + 5 H(+)(out). Produces ATP from ADP in the presence of a proton gradient across the membrane. The alpha chain is a regulatory subunit. The polypeptide is ATP synthase subunit alpha (Nocardioides sp. (strain ATCC BAA-499 / JS614)).